We begin with the raw amino-acid sequence, 291 residues long: Ribose-phosphate pyrophosphokinase (291 aa).

Residues 34–36 and 92–93 each bind ATP; these read DGE and RQ. Mg(2+)-binding residues include histidine 125 and aspartate 165. The active site involves lysine 188. The D-ribose 5-phosphate site is built by arginine 190 and aspartate 214.

Belongs to the ribose-phosphate pyrophosphokinase family. Class III (archaeal) subfamily. The cofactor is Mg(2+).

It localises to the cytoplasm. The enzyme catalyses D-ribose 5-phosphate + ATP = 5-phospho-alpha-D-ribose 1-diphosphate + AMP + H(+). The protein operates within metabolic intermediate biosynthesis; 5-phospho-alpha-D-ribose 1-diphosphate biosynthesis; 5-phospho-alpha-D-ribose 1-diphosphate from D-ribose 5-phosphate (route I): step 1/1. In terms of biological role, involved in the biosynthesis of the central metabolite phospho-alpha-D-ribosyl-1-pyrophosphate (PRPP) via the transfer of pyrophosphoryl group from ATP to 1-hydroxyl of ribose-5-phosphate (Rib-5-P). This Methanopyrus kandleri (strain AV19 / DSM 6324 / JCM 9639 / NBRC 100938) protein is Ribose-phosphate pyrophosphokinase.